We begin with the raw amino-acid sequence, 2290 residues long: Armadillo repeat-containing X-linked protein 4 (2290 aa).

Residues 7–24 (VGWVTAGLVIWAGTCYYI) form a helical membrane-spanning segment. Disordered regions lie at residues 517 to 549 (QGEALPNTRGKARGKAKAKCKTGPGMDMKTCTQ), 564 to 583 (SRVDGRGNPNATSKAGTKAD), 967 to 988 (KVRGNSNAVPKAEAGADTVGSA), 1014 to 1087 (AVPK…ACRK), 1302 to 1430 (GSWA…ANSG), 1521 to 1715 (GSWG…RSED), 1911 to 1931 (SNTFRSKSGKDASFESGAGDN), and 1954 to 1973 (NENTSEDKSAPKAKAKKSSE). The span at 526–536 (GKARGKAKAKC) shows a compositional bias: basic residues. Polar residues predominate over residues 1073–1087 (TSESEGGSGTQACRK). Gly residues-rich tracts occupy residues 1328–1341 (SWAGAGGQASGGSM) and 1403–1414 (AGAGGQAGGGSK). Over residues 1419 to 1430 (DQSSGRSWANSG) the composition is skewed to polar residues. Over residues 1521–1535 (GSWGGASGQDVGGSR) the composition is skewed to gly residues. A compositionally biased stretch (polar residues) spans 1537 to 1558 (GPTNQSSAGSWDSPGSQVSGSC). Composition is skewed to gly residues over residues 1581–1598 (IGGGFWPGAGDQTGGGSR) and 1609–1623 (GSWGVAGGQVLGGAR). Polar residues predominate over residues 1628–1645 (DQSSGGSWAGTGNQSSGR). Positions 1674 to 1687 (GAGSQASGESWAGS) are enriched in low complexity. ARM repeat units lie at residues 2031–2071 (RCKH…NSAD), 2073–2112 (SYSHEVVRNVGGISVIESLLNNPYPSVRQKALNALNNISV), 2153–2192 (ITSEYQHMVTNYISEFLRLLTVGSGETKDHVLGMLLNFSK), and 2194–2234 (PSMT…NINY).

The protein belongs to the eutherian X-chromosome-specific Armcx family.

It is found in the membrane. The protein is Armadillo repeat-containing X-linked protein 4 (ARMCX4) of Homo sapiens (Human).